The primary structure comprises 291 residues: Halorhodopsin (291 aa).

Residues 1-30 (MTETLPPVTESAVALQAEVTQRELFEFVLN) lie on the Extracellular side of the membrane. A helical transmembrane segment spans residues 31-56 (DPLLASSLYINIALAGLSILLFVFMT). The Cytoplasmic portion of the chain corresponds to 57 to 62 (RGLDDP). A helical membrane pass occupies residues 63–86 (RAKLIAVSTILVPVVSIASYTGLA). Residues 87 to 120 (SGLTISVLEMPAGHFAEGSSVMLGGEEVDGVVTM) are Extracellular-facing. The chain crosses the membrane as a helical span at residues 121–142 (WGRYLTWALSTPMILLALGLLA). Topologically, residues 143–145 (GSN) are cytoplasmic. The helical transmembrane segment at 146–169 (ATKLFTAITFDIAMCVTGLAAALT) threads the bilayer. Topologically, residues 170-172 (TSS) are extracellular. A helical membrane pass occupies residues 173–195 (HLMRWFWYAISCACFLVVLYILL). Residues 196 to 207 (VEWAQDAKAAGT) are Cytoplasmic-facing. Residues 208-231 (ADMFNTLKLLTVVMWLGYPIVWAL) traverse the membrane as a helical segment. Residues 232 to 240 (GVEGIAVLP) are Extracellular-facing. The chain crosses the membrane as a helical span at residues 241-269 (VGVTSWGYSFLDIVAKYIFAFLLLNYLTS). Lys-256 is modified (N6-(retinylidene)lysine). The Cytoplasmic portion of the chain corresponds to 270–291 (NESVVSGSILDVPSASGTPADD).

Belongs to the archaeal/bacterial/fungal opsin family.

Its subcellular location is the cell membrane. Light-driven anion pump. Binding affinity for the anions is in the order, bromide &gt; chloride &gt; nitrate &gt; azide &gt; bromate and binding is pH dependent. This is Halorhodopsin (hop) from Natronomonas pharaonis (Natronobacterium pharaonis).